The primary structure comprises 543 residues: EH domain-containing protein 2 (543 aa).

Phosphoserine occurs at positions 3 and 44. The region spanning 55-286 (FDGKPMVLVA…DLFRDIQGLP (232 aa)) is the Dynamin-type G domain. The G1 motif stretch occupies residues 65–72 (GQYSTGKT). 65 to 72 (GQYSTGKT) provides a ligand contact to ATP. The interval 91-92 (EP) is G2 motif. Residues 153-156 (DTPG) are G3 motif. The G4 motif stretch occupies residues 219 to 222 (NKAD). Lys220 contacts ATP. Val243 is a region of interest (G5 motif). Trp258 serves as a coordination point for ATP. Residues 320–340 (SVFGKENKKKQLIFKLPVIFA) form a mediates membrane-binding region. A phosphoserine mark is found at Ser438, Ser468, Ser470, Ser484, and Ser493. Residues 449–537 (DKSKYDEIFY…RRLVPPSKRR (89 aa)) form the EH domain. One can recognise an EF-hand domain in the interval 481 to 516 (LPNSVLGRIWKLSDVDRDGMLDDEEFALASHLIEAK). Ca(2+) is bound by residues Asp494, Asp496, Asp498, Met500, and Glu505. The segment at 521–543 (GLPTNLPRRLVPPSKRRQKGSAE) is disordered. A compositionally biased stretch (basic residues) spans 534-543 (SKRRQKGSAE).

It belongs to the TRAFAC class dynamin-like GTPase superfamily. Dynamin/Fzo/YdjA family. EHD subfamily. Homodimer and homooligomer. Interacts with EHD1. May also interact with EHD3 and EHD4. Interacts with MYOF. Interacts with EHBP1. Interacts with FER1L5 (via second C2 domain). Interacts with CAV1 in a cholesterol-dependent manner. Interacts (via EH domain) with PACSIN2 (via NPF motifs); this interaction probably stabilizes the caveolae.

It is found in the cell membrane. It localises to the membrane. The protein resides in the caveola. Its subcellular location is the endosome membrane. The protein localises to the cytoplasm. It is found in the cytosol. The very low intrinsic ATPase activity is increased upon interaction with liposomes. Functionally, ATP- and membrane-binding protein that controls membrane reorganization/tubulation upon ATP hydrolysis. Plays a role in membrane trafficking between the plasma membrane and endosomes. Important for the internalization of GLUT4. Required for fusion of myoblasts to skeletal muscle myotubes. Required for normal translocation of FER1L5 to the plasma membrane. Regulates the equilibrium between cell surface-associated and cell surface-dissociated caveolae by constraining caveolae at the cell membrane. This chain is EH domain-containing protein 2, found in Rattus norvegicus (Rat).